The following is a 338-amino-acid chain: MKRMIALDGAQGEGGGQILRSALSLSMITGQPFTITSIRAGRAKPGLLRQHLTAVKAATEICGATVEGAELGSQRLLFRPGTVRGGDYRFAIGSAGSCTLVLQTVLPALWFADGPSRVEVSGGTDNPSAPPADFIRRVLEPLLAKIGIHQQTTLLRHGFYPAGGGVVATEVSPVASFNTLQLGERGNIVQMRGEVLLAGVPRHVAEREIATLAGSFSLHEQNIHNLPRDQGPGNTVSLEVESENITERFFVVGEKRVSAEVVAAQLVKEVKRYLASTAAVGEYLADQLVLPMALAGAGEFTVAHPSCHLLTNIAVVERFLPVRFSLIETDGVTRVSIE.

ATP is bound by residues glutamine 103 and tyrosine 283 to glutamine 287. Histidine 308 serves as the catalytic Tele-AMP-histidine intermediate.

The protein belongs to the RNA 3'-terminal cyclase family. Type 1 subfamily.

The protein localises to the cytoplasm. It catalyses the reaction a 3'-end 3'-phospho-ribonucleotide-RNA + ATP = a 3'-end 2',3'-cyclophospho-ribonucleotide-RNA + AMP + diphosphate. In terms of biological role, catalyzes the conversion of 3'-phosphate to a 2',3'-cyclic phosphodiester at the end of RNA. The mechanism of action of the enzyme occurs in 3 steps: (A) adenylation of the enzyme by ATP; (B) transfer of adenylate to an RNA-N3'P to produce RNA-N3'PP5'A; (C) and attack of the adjacent 2'-hydroxyl on the 3'-phosphorus in the diester linkage to produce the cyclic end product. The biological role of this enzyme is unknown but it is likely to function in some aspects of cellular RNA processing. The polypeptide is RNA 3'-terminal phosphate cyclase (Escherichia coli (strain K12 / MC4100 / BW2952)).